The chain runs to 29 residues: Small ribosomal subunit protein uS7 (29 aa).

The disordered stretch occupies residues 1-29 (ELIGAANRDTKSFSINRKDAKERVAKAAR). The span at 8 to 29 (RDTKSFSINRKDAKERVAKAAR) shows a compositional bias: basic and acidic residues.

It belongs to the universal ribosomal protein uS7 family. As to quaternary structure, part of the 30S ribosomal subunit.

Functionally, one of the primary rRNA binding proteins, it binds directly to 16S rRNA where it nucleates assembly of the head domain of the 30S subunit. Is located at the subunit interface close to the decoding center. This chain is Small ribosomal subunit protein uS7 (rps7), found in Methanosarcina thermophila.